We begin with the raw amino-acid sequence, 339 residues long: N-acetyl-gamma-glutamyl-phosphate reductase (339 aa).

Residue cysteine 145 is part of the active site.

It belongs to the NAGSA dehydrogenase family. Type 1 subfamily.

It is found in the cytoplasm. It carries out the reaction N-acetyl-L-glutamate 5-semialdehyde + phosphate + NADP(+) = N-acetyl-L-glutamyl 5-phosphate + NADPH + H(+). Its pathway is amino-acid biosynthesis; L-arginine biosynthesis; N(2)-acetyl-L-ornithine from L-glutamate: step 3/4. Catalyzes the NADPH-dependent reduction of N-acetyl-5-glutamyl phosphate to yield N-acetyl-L-glutamate 5-semialdehyde. This chain is N-acetyl-gamma-glutamyl-phosphate reductase, found in Thermotoga sp. (strain RQ2).